We begin with the raw amino-acid sequence, 269 residues long: Formamidopyrimidine-DNA glycosylase (269 aa).

The Schiff-base intermediate with DNA role is filled by P2. E3 acts as the Proton donor in catalysis. Catalysis depends on K57, which acts as the Proton donor; for beta-elimination activity. The DNA site is built by H90, R109, and K150. The FPG-type zinc finger occupies 235–269 (QVYGRKGEPCRVCGTPIVATKHAQRATFYCRQCQK). Residue R259 is the Proton donor; for delta-elimination activity of the active site.

Belongs to the FPG family. Monomer. Zn(2+) serves as cofactor.

It catalyses the reaction Hydrolysis of DNA containing ring-opened 7-methylguanine residues, releasing 2,6-diamino-4-hydroxy-5-(N-methyl)formamidopyrimidine.. The enzyme catalyses 2'-deoxyribonucleotide-(2'-deoxyribose 5'-phosphate)-2'-deoxyribonucleotide-DNA = a 3'-end 2'-deoxyribonucleotide-(2,3-dehydro-2,3-deoxyribose 5'-phosphate)-DNA + a 5'-end 5'-phospho-2'-deoxyribonucleoside-DNA + H(+). Involved in base excision repair of DNA damaged by oxidation or by mutagenic agents. Acts as a DNA glycosylase that recognizes and removes damaged bases. Has a preference for oxidized purines, such as 7,8-dihydro-8-oxoguanine (8-oxoG). Has AP (apurinic/apyrimidinic) lyase activity and introduces nicks in the DNA strand. Cleaves the DNA backbone by beta-delta elimination to generate a single-strand break at the site of the removed base with both 3'- and 5'-phosphates. The protein is Formamidopyrimidine-DNA glycosylase of Escherichia coli (strain K12 / MC4100 / BW2952).